Consider the following 55-residue polypeptide: Large ribosomal subunit protein bL33 (55 aa).

This sequence belongs to the bacterial ribosomal protein bL33 family.

The polypeptide is Large ribosomal subunit protein bL33 (Pectobacterium carotovorum subsp. carotovorum (strain PC1)).